The primary structure comprises 517 residues: Aldehyde dehydrogenase X, mitochondrial (517 aa).

Residues 1–17 (MLRFLAPRLLSLQGRTA) constitute a mitochondrion transit peptide. Lysine 51 carries the N6-acetyllysine modification. Lysine 52 is modified (N6-acetyllysine; alternate). Lysine 52 bears the N6-succinyllysine; alternate mark. An N6-succinyllysine modification is found at lysine 81. Residue 262–267 (GSTEVG) participates in NAD(+) binding. The active-site Proton acceptor is glutamate 285. Catalysis depends on cysteine 319, which acts as the Nucleophile. 5 positions are modified to N6-acetyllysine; alternate: lysine 364, lysine 383, lysine 399, lysine 414, and lysine 426. Lysine 364, lysine 383, lysine 399, lysine 414, and lysine 426 each carry N6-succinyllysine; alternate. At lysine 429 the chain carries N6-acetyllysine.

The protein belongs to the aldehyde dehydrogenase family. Homotetramer. Liver, testis and to a lesser extent in brain.

It is found in the mitochondrion matrix. It catalyses the reaction an aldehyde + NAD(+) + H2O = a carboxylate + NADH + 2 H(+). It participates in alcohol metabolism; ethanol degradation; acetate from ethanol: step 2/2. Functionally, ALDHs play a major role in the detoxification of alcohol-derived acetaldehyde. They are involved in the metabolism of corticosteroids, biogenic amines, neurotransmitters, and lipid peroxidation. In Homo sapiens (Human), this protein is Aldehyde dehydrogenase X, mitochondrial (ALDH1B1).